The primary structure comprises 109 residues: ATP synthase subunit c (109 aa).

Transmembrane regions (helical) follow at residues 42–62 (YIGT…QGFS) and 88–108 (LALA…IIFV).

Belongs to the ATPase C chain family. In terms of assembly, F-type ATPases have 2 components, F(1) - the catalytic core - and F(0) - the membrane proton channel. F(1) has five subunits: alpha(3), beta(3), gamma(1), delta(1), epsilon(1). F(0) has three main subunits: a(1), b(2) and c(10-14). The alpha and beta chains form an alternating ring which encloses part of the gamma chain. F(1) is attached to F(0) by a central stalk formed by the gamma and epsilon chains, while a peripheral stalk is formed by the delta and b chains.

It is found in the cell membrane. Its function is as follows. F(1)F(0) ATP synthase produces ATP from ADP in the presence of a proton or sodium gradient. F-type ATPases consist of two structural domains, F(1) containing the extramembraneous catalytic core and F(0) containing the membrane proton channel, linked together by a central stalk and a peripheral stalk. During catalysis, ATP synthesis in the catalytic domain of F(1) is coupled via a rotary mechanism of the central stalk subunits to proton translocation. Functionally, key component of the F(0) channel; it plays a direct role in translocation across the membrane. A homomeric c-ring of between 10-14 subunits forms the central stalk rotor element with the F(1) delta and epsilon subunits. In Ureaplasma urealyticum serovar 10 (strain ATCC 33699 / Western), this protein is ATP synthase subunit c.